We begin with the raw amino-acid sequence, 249 residues long: Solute carrier family 25 member 35 (249 aa).

Solcar repeat units follow at residues 1 to 90 and 152 to 243; these read MDFL…AEAG and QSWK…LRMV. A run of 4 helical transmembrane segments spans residues 38–58, 59–79, 154–174, and 226–249; these read TYQRHYRNVFHAFITIGKVDG, LAALQRGLAPALLYQFLMNGI, WKVALAAAMVSGIAVVLAMTP, and LGPHTILSLFFWDQLRMVYYTYTK.

The protein belongs to the mitochondrial carrier (TC 2.A.29) family.

The protein localises to the mitochondrion inner membrane. It catalyses the reaction a dicarboxylate(in) + sulfate(out) = a dicarboxylate(out) + sulfate(in). Functionally, putative antiporter that exchanges dicarboxylates and sulfur oxoanions across the inner membrane of mitochondria. The sequence is that of Solute carrier family 25 member 35 (SLC25A35) from Bos taurus (Bovine).